Reading from the N-terminus, the 1464-residue chain is DNA polymerase III PolC-type (1464 aa).

The Exonuclease domain occupies Y426–L582.

It belongs to the DNA polymerase type-C family. PolC subfamily.

Its subcellular location is the cytoplasm. The catalysed reaction is DNA(n) + a 2'-deoxyribonucleoside 5'-triphosphate = DNA(n+1) + diphosphate. Its function is as follows. Required for replicative DNA synthesis. This DNA polymerase also exhibits 3' to 5' exonuclease activity. This is DNA polymerase III PolC-type from Streptococcus thermophilus (strain ATCC BAA-250 / LMG 18311).